A 481-amino-acid chain; its full sequence is Glutamyl-tRNA(Gln) amidotransferase subunit A (481 aa).

Residues K76 and S151 each act as charge relay system in the active site. The active-site Acyl-ester intermediate is the S175.

This sequence belongs to the amidase family. GatA subfamily. Heterotrimer of A, B and C subunits.

The enzyme catalyses L-glutamyl-tRNA(Gln) + L-glutamine + ATP + H2O = L-glutaminyl-tRNA(Gln) + L-glutamate + ADP + phosphate + H(+). Allows the formation of correctly charged Gln-tRNA(Gln) through the transamidation of misacylated Glu-tRNA(Gln) in organisms which lack glutaminyl-tRNA synthetase. The reaction takes place in the presence of glutamine and ATP through an activated gamma-phospho-Glu-tRNA(Gln). In Neisseria meningitidis serogroup B (strain ATCC BAA-335 / MC58), this protein is Glutamyl-tRNA(Gln) amidotransferase subunit A.